A 420-amino-acid polypeptide reads, in one-letter code: Polyketide biosynthesis 3-hydroxy-3-methylglutaryl-ACP synthase PksG (420 aa).

Residue glutamate 82 is the Proton donor/acceptor of the active site. Catalysis depends on cysteine 114, which acts as the Acyl-thioester intermediate. Histidine 250 (proton donor/acceptor) is an active-site residue.

The protein belongs to the thiolase-like superfamily. HMG-CoA synthase family.

It is found in the cytoplasm. It catalyses the reaction 3-oxobutanoyl-[ACP] + acetyl-[ACP] + H2O = (3S)-hydroxy-3-methylglutaryl-[ACP] + holo-[ACP] + H(+). The protein operates within antibiotic biosynthesis; bacillaene biosynthesis. In terms of biological role, involved in some intermediate steps for the synthesis of the antibiotic polyketide bacillaene which is involved in secondary metabolism. It catalyzes the aldol condensation between the acetyl group attached to the acyl-carrier-protein AcpK (Ac-AcpK) and a beta-ketothioester polyketide intermediate linked to one of the consecutive thiolation domains of PksL. This chain is Polyketide biosynthesis 3-hydroxy-3-methylglutaryl-ACP synthase PksG (pksG), found in Bacillus subtilis (strain 168).